A 263-amino-acid polypeptide reads, in one-letter code: Thymidylate synthase (263 aa).

Residues Arg25 and 123–124 each bind dUMP; that span reads RR. Catalysis depends on Cys143, which acts as the Nucleophile. Residues 163–166, Asn174, and 204–206 each bind dUMP; these read RSGD and HIY. Asp166 provides a ligand contact to (6R)-5,10-methylene-5,6,7,8-tetrahydrofolate. Residue Ser262 participates in (6R)-5,10-methylene-5,6,7,8-tetrahydrofolate binding.

This sequence belongs to the thymidylate synthase family. Bacterial-type ThyA subfamily. As to quaternary structure, homodimer.

Its subcellular location is the cytoplasm. The enzyme catalyses dUMP + (6R)-5,10-methylene-5,6,7,8-tetrahydrofolate = 7,8-dihydrofolate + dTMP. Its pathway is pyrimidine metabolism; dTTP biosynthesis. Functionally, catalyzes the reductive methylation of 2'-deoxyuridine-5'-monophosphate (dUMP) to 2'-deoxythymidine-5'-monophosphate (dTMP) while utilizing 5,10-methylenetetrahydrofolate (mTHF) as the methyl donor and reductant in the reaction, yielding dihydrofolate (DHF) as a by-product. This enzymatic reaction provides an intracellular de novo source of dTMP, an essential precursor for DNA biosynthesis. The sequence is that of Thymidylate synthase from Clostridium beijerinckii (strain ATCC 51743 / NCIMB 8052) (Clostridium acetobutylicum).